The following is an 886-amino-acid chain: Receptor-like kinase TMK2 (886 aa).

A signal peptide spans 1 to 20; the sequence is MIAKNFLLLLCFIALVNVES. At 21–460 the chain is on the extracellular side; it reads SPDEAVMIAL…GKKASSNAGK (440 aa). The N-linked (GlcNAc...) asparagine glycan is linked to Asn-41. Cysteines 48 and 56 form a disulfide. LRR repeat units follow at residues 59-83, 84-106, 107-129, 131-155, 157-179, 182-206, 208-232, 233-254, 255-279, and 281-302; these read SNRV…LGKL, TSLT…LAGL, KSLV…FFSG, SSLQ…LENA, SLVD…LFEG, FSSL…FSDS, VQVL…LQKM, TSLT…DFSG, LVSL…LFEL, and SLSD…FTAP. 3 N-linked (GlcNAc...) asparagine glycosylation sites follow: Asn-154, Asn-167, and Asn-202. Asn-237 is a glycosylation site (N-linked (GlcNAc...) asparagine). Asn-298 carries N-linked (GlcNAc...) asparagine glycosylation. 2 cysteine pairs are disulfide-bonded: Cys-315-Cys-323 and Cys-353-Cys-361. LRR repeat units lie at residues 363–386, 387–410, and 411–438; these read GTDI…RFAD, FASL…ELAK, and LSNL…IVNT. Residues Asn-377, Asn-394, Asn-401, Asn-432, and Asn-437 are each glycosylated (N-linked (GlcNAc...) asparagine). Residues 461–481 form a helical membrane-spanning segment; sequence IVGSVIGILLALLLIGVAIFF. The Cytoplasmic portion of the chain corresponds to 482-886; it reads LVKKKMQYHK…ESTFKSGQGR (405 aa). In terms of domain architecture, Protein kinase spans 547–827; that stretch reads FDEKNILGRG…HVVNVLVSLV (281 aa). Residues 553–561 and Lys-575 contribute to the ATP site; that span reads LGRGGFGIV. Catalysis depends on Asp-676, which acts as the Proton acceptor.

It belongs to the protein kinase superfamily. Ser/Thr protein kinase family. In terms of tissue distribution, expressed in siliques and flowers.

It is found in the membrane. It catalyses the reaction L-seryl-[protein] + ATP = O-phospho-L-seryl-[protein] + ADP + H(+). It carries out the reaction L-threonyl-[protein] + ATP = O-phospho-L-threonyl-[protein] + ADP + H(+). Its function is as follows. Involved in auxin signal transduction and cell expansion and proliferation regulation. The protein is Receptor-like kinase TMK2 of Arabidopsis thaliana (Mouse-ear cress).